A 727-amino-acid chain; its full sequence is E3 SUMO-protein ligase pli1 (727 aa).

An SAP domain is found at glutamate 18 to isoleucine 52. Positions tyrosine 108 to tyrosine 261 constitute a PINIT domain. The segment at glutamine 290–serine 371 adopts an SP-RING-type zinc-finger fold. Zn(2+)-binding residues include cysteine 321, histidine 323, cysteine 344, and cysteine 347. Residues serine 395 and serine 396 each carry the phosphoserine modification. 2 disordered regions span residues glutamate 408–serine 558 and glutamine 706–aspartate 727. 2 stretches are compositionally biased toward polar residues: residues threonine 417–serine 435 and valine 459–threonine 494. Over residues serine 546–serine 558 the composition is skewed to low complexity.

It belongs to the PIAS family. In terms of assembly, interacts with hus5/ubc9.

It is found in the nucleus. It participates in protein modification; protein sumoylation. Acts as an E3 ligase mediating SUMO/Smt3 attachment to other proteins. Involved in the maintenance of the centromere and in telomere length. Regulates recombination, via extension sumoylation, particularly within the heterochromatin repeats. The protein is E3 SUMO-protein ligase pli1 (pli1) of Schizosaccharomyces pombe (strain 972 / ATCC 24843) (Fission yeast).